Here is a 333-residue protein sequence, read N- to C-terminus: MLVLGIESSCDETGVAVYDSESGLLSHALHSQIATHRVHGGVVPELASRDHVNYLVPLVDEVLTKAQIRKNQLDGIAYTAGPGLIGALLVGSCFAKSLAYALNIPALAIHHLEAHLLAAKMETPSLDFPFIALLVSGGHCQLIEVNNIGEYRLLGDTLDDAVGEAFDKTAKLMGIPYPGGAVLANLADQCLSTPYQFPRPMTDRPGLDFSFSGLKTHALNTWNQSEKKESDRSEIAKAFQQAVVETLIIKCKRAIKESQSKRLVVAGGVGANKALRSALQKWIKDIKGEVYFPALEYCTDNGAMVAYAGCLRMMRGESDGGLGVMVKPRWPLA.

Fe cation contacts are provided by His111 and His115. Residues 134–138 (LVSGG), Asp167, Gly180, and Asn272 contribute to the substrate site. Asp300 contacts Fe cation.

This sequence belongs to the KAE1 / TsaD family. It depends on Fe(2+) as a cofactor.

It is found in the cytoplasm. The enzyme catalyses L-threonylcarbamoyladenylate + adenosine(37) in tRNA = N(6)-L-threonylcarbamoyladenosine(37) in tRNA + AMP + H(+). In terms of biological role, required for the formation of a threonylcarbamoyl group on adenosine at position 37 (t(6)A37) in tRNAs that read codons beginning with adenine. Is involved in the transfer of the threonylcarbamoyl moiety of threonylcarbamoyl-AMP (TC-AMP) to the N6 group of A37, together with TsaE and TsaB. TsaD likely plays a direct catalytic role in this reaction. The protein is tRNA N6-adenosine threonylcarbamoyltransferase of Legionella pneumophila (strain Corby).